A 163-amino-acid polypeptide reads, in one-letter code: NADH-quinone oxidoreductase subunit I (163 aa).

2 4Fe-4S ferredoxin-type domains span residues 54–84 (LRRY…IESD) and 94–123 (TRYD…ETQI). The [4Fe-4S] cluster site is built by cysteine 64, cysteine 67, cysteine 70, cysteine 74, cysteine 103, cysteine 106, cysteine 109, and cysteine 113.

Belongs to the complex I 23 kDa subunit family. In terms of assembly, NDH-1 is composed of 14 different subunits. Subunits NuoA, H, J, K, L, M, N constitute the membrane sector of the complex. [4Fe-4S] cluster is required as a cofactor.

The protein localises to the cell inner membrane. It catalyses the reaction a quinone + NADH + 5 H(+)(in) = a quinol + NAD(+) + 4 H(+)(out). NDH-1 shuttles electrons from NADH, via FMN and iron-sulfur (Fe-S) centers, to quinones in the respiratory chain. The immediate electron acceptor for the enzyme in this species is believed to be ubiquinone. Couples the redox reaction to proton translocation (for every two electrons transferred, four hydrogen ions are translocated across the cytoplasmic membrane), and thus conserves the redox energy in a proton gradient. This Cupriavidus necator (strain ATCC 17699 / DSM 428 / KCTC 22496 / NCIMB 10442 / H16 / Stanier 337) (Ralstonia eutropha) protein is NADH-quinone oxidoreductase subunit I.